Here is a 142-residue protein sequence, read N- to C-terminus: Hemoglobin subunit alpha-A (142 aa).

The Globin domain occupies 2–142 (VLSAADKNNV…VGTVLTAKYR (141 aa)). H59 is a binding site for O2. Residue H88 coordinates heme b.

The protein belongs to the globin family. Heterotetramer of two alpha chains and two beta chains. As to expression, red blood cells.

Functionally, involved in oxygen transport from the lung to the various peripheral tissues. The protein is Hemoglobin subunit alpha-A (HBAA) of Gallus gallus (Chicken).